The primary structure comprises 1526 residues: DNA topoisomerase 2-alpha (1526 aa).

Met-1 is modified (N-acetylmethionine). Ser-4 carries the post-translational modification Phosphoserine. Residue Lys-17 forms a Glycyl lysine isopeptide (Lys-Gly) (interchain with G-Cter in SUMO2) linkage. Residues Asn-90, Asn-118, and 146–148 (SSN) each bind ATP. Residues Lys-154 and Lys-155 each participate in a glycyl lysine isopeptide (Lys-Gly) (interchain with G-Cter in SUMO2) cross-link. Position 159–166 (159–166 (GRNGYGAK)) interacts with ATP. Thr-280 is subject to Phosphothreonine. The interval 340-342 (KKK) is interaction with DNA. Lys-350 is covalently cross-linked (Glycyl lysine isopeptide (Lys-Gly) (interchain with G-Cter in SUMO2)). 374 to 376 (QTK) contacts ATP. Residues Lys-384, Lys-395, Lys-414, Lys-416, Lys-423, and Lys-438 each participate in a glycyl lysine isopeptide (Lys-Gly) (interchain with G-Cter in SUMO2) cross-link. The region spanning 453 to 570 (CTLILTEGDS…SLLRHRFLEE (118 aa)) is the Toprim domain. Position 459 (Glu-459) interacts with Mg(2+). Glycyl lysine isopeptide (Lys-Gly) (interchain with G-Cter in SUMO2) cross-links involve residues Lys-464, Lys-478, and Lys-527. The Mg(2+) site is built by Asp-539 and Asp-541. Residues Lys-582, Lys-597, Lys-612, Lys-620, Lys-623, Lys-630, Lys-637, Lys-653, Lys-660, and Lys-674 each participate in a glycyl lysine isopeptide (Lys-Gly) (interchain with G-Cter in SUMO2) cross-link. The region spanning 713–1168 (IPSMVDGLKP…TPSDLWKEDL (456 aa)) is the Topo IIA-type catalytic domain. The active-site O-(5'-phospho-DNA)-tyrosine intermediate is the Tyr-803. Residues 988–997 (KLQTSLTCNS) are interaction with DNA. A Glycyl lysine isopeptide (Lys-Gly) (interchain with G-Cter in SUMO2) cross-link involves residue Lys-1073. Basic and acidic residues predominate over residues 1087-1096 (AWKEAQQKVP). A disordered region spans residues 1087-1120 (AWKEAQQKVPEEEENEENEESESESTSPAAESGP). Acidic residues predominate over residues 1097–1109 (EEEENEENEESES). Glycyl lysine isopeptide (Lys-Gly) (interchain with G-Cter in SUMO2) cross-links involve residues Lys-1193 and Lys-1201. The residue at position 1210 (Ser-1210) is a Phosphoserine. The segment at 1229 to 1526 (EKKIRRKIKS…YLEESDDDLF (298 aa)) is disordered. Residue Lys-1237 forms a Glycyl lysine isopeptide (Lys-Gly) (interchain with G-Cter in SUMO1); alternate linkage. Residue Lys-1237 forms a Glycyl lysine isopeptide (Lys-Gly) (interchain with G-Cter in SUMO2); alternate linkage. Residue Thr-1244 is modified to Phosphothreonine. The span at 1254–1268 (LRQRLEKRQKREPGT) shows a compositional bias: basic and acidic residues. Glycyl lysine isopeptide (Lys-Gly) (interchain with G-Cter in SUMO2) cross-links involve residues Lys-1272, Lys-1279, and Lys-1282. Ser-1291, Ser-1293, Ser-1295, and Ser-1298 each carry phosphoserine. The residue at position 1323 (Thr-1323) is a Phosphothreonine. Residues 1326–1346 (LDSDDDFSGLDEKDEDEDFFP) show a composition bias toward acidic residues. Phosphoserine occurs at positions 1328 and 1333. Thr-1350 is modified (phosphothreonine). Glycyl lysine isopeptide (Lys-Gly) (interchain with G-Cter in SUMO2) cross-links involve residues Lys-1359, Lys-1363, and Lys-1369. Phosphoserine is present on residues Ser-1370 and Ser-1373. Lys-1381 participates in a covalent cross-link: Glycyl lysine isopeptide (Lys-Gly) (interchain with G-Cter in SUMO2). 2 positions are modified to phosphoserine: Ser-1383 and Ser-1387. The span at 1417–1427 (TKGQSLTSTAG) shows a compositional bias: polar residues. Lys-1418 participates in a covalent cross-link: Glycyl lysine isopeptide (Lys-Gly) (interchain with G-Cter in SUMO2); alternate. Position 1418 is an N6-acetyllysine; alternate (Lys-1418). An interaction with PLSCR1 region spans residues 1429-1435 (KKRAVPK). Lys-1438 participates in a covalent cross-link: Glycyl lysine isopeptide (Lys-Gly) (interchain with G-Cter in SUMO2); alternate. At Lys-1438 the chain carries N6-acetyllysine; alternate. Glycyl lysine isopeptide (Lys-Gly) (interchain with G-Cter in SUMO2) cross-links involve residues Lys-1450 and Lys-1455. 4 positions are modified to phosphoserine: Ser-1465, Ser-1467, Ser-1470, and Ser-1472. Residues Lys-1480 and Lys-1488 each participate in a glycyl lysine isopeptide (Lys-Gly) (interchain with G-Cter in SUMO2) cross-link. Residues 1487-1498 (LKGEERDFHVDL) are compositionally biased toward basic and acidic residues. At Ser-1521 the chain carries Phosphoserine.

The protein belongs to the type II topoisomerase family. In terms of assembly, homodimer. Interacts with COPS5. Interacts with RECQL5; this stimulates DNA decatenation. Interacts with SETMAR; stimulates the topoisomerase activity. Interacts with DHX9; this interaction occurs in a E2 enzyme UBE2I- and RNA-dependent manner, negatively regulates DHX9-mediated double-stranded DNA and RNA duplex helicase activity and stimulates TOP2A-mediated supercoiled DNA relaxation activity. Interacts with HNRNPU (via C-terminus); this interaction protects the topoisomerase TOP2A from degradation and positively regulates the relaxation of supercoiled DNA in a RNA-dependent manner. Interacts with MCM3AP. Interacts with ERCC6. Interacts with PLSCR1. Interacts with GCNA; this interaction allows the resolution of topoisomerase II (TOP2A) DNA-protein cross-links. Interacts with POL1RA/RPA1 (via dock II) and UBTF in the context of Pol I complex; may assist Pol I transcription initiation by releasing supercoils occurring during DNA unwinding. Interacts with TPRN; TPRN interacts with a number of DNA damage response proteins, is recruited to sites of DNA damage and may play a role in DNA damage repair. Mg(2+) is required as a cofactor. Requires Mn(2+) as cofactor. Ca(2+) serves as cofactor. In terms of processing, phosphorylation has no effect on catalytic activity.

The protein resides in the cytoplasm. It localises to the nucleus. It is found in the nucleoplasm. The protein localises to the nucleolus. It carries out the reaction ATP-dependent breakage, passage and rejoining of double-stranded DNA.. Functionally, key decatenating enzyme that alters DNA topology by binding to two double-stranded DNA molecules, generating a double-stranded break in one of the strands, passing the intact strand through the broken strand, and religating the broken strand. May play a role in regulating the period length of BMAL1 transcriptional oscillation. This chain is DNA topoisomerase 2-alpha (Top2a), found in Rattus norvegicus (Rat).